We begin with the raw amino-acid sequence, 190 residues long: Somatotropin (190 aa).

Position 19 (His-19) interacts with Zn(2+). The cysteines at positions 52 and 163 are disulfide-linked. Ser-105 carries the post-translational modification Phosphoserine. Zn(2+) is bound at residue Glu-172. Cys-180 and Cys-188 are oxidised to a cystine.

The protein belongs to the somatotropin/prolactin family.

It localises to the secreted. Plays an important role in growth control. Its major role in stimulating body growth is to stimulate the liver and other tissues to secrete IGF1. It stimulates both the differentiation and proliferation of myoblasts. It also stimulates amino acid uptake and protein synthesis in muscle and other tissues. This chain is Somatotropin (GH1), found in Balaenoptera borealis (Sei whale).